The primary structure comprises 204 residues: Hydrophilin YNL190W (204 aa).

The signal sequence occupies residues 1–20 (MKFSSVTAITLATVATVATA). A compositionally biased stretch (low complexity) spans 35–46 (SDGSLTTTTSTH). The tract at residues 35–179 (SDGSLTTTTS…ARKNNAAPGP (145 aa)) is disordered. The span at 47 to 59 (TTHKYGKFNKTSK) shows a compositional bias: basic residues. N-linked (GlcNAc...) asparagine glycosylation is found at N55, N64, N75, N84, N95, N104, N115, N124, N135, N144, and N155. Residues 67–79 (GTHKYGKFNKTSK) show a composition bias toward basic residues. Residues 87–99 (GTHKYGKFNKTSK) are compositionally biased toward basic residues. The span at 107–119 (GTHKYGKFNKTSK) shows a compositional bias: basic residues. Over residues 127–139 (GTHKYGKFNKTSK) the composition is skewed to basic residues. The segment covering 147-156 (GTHKYGKFNK) has biased composition (basic residues). N174 carries GPI-anchor amidated asparagine lipidation. Positions 175–204 (AAPGPSNFNSIKLFGVTAGSAAVAGALLLL) are cleaved as a propeptide — removed in mature form.

Belongs to the PGA14 family. In terms of processing, the GPI-anchor is attached to the protein in the endoplasmic reticulum and serves to target the protein to the cell surface. There, the glucosamine-inositol phospholipid moiety is cleaved off and the GPI-modified mannoprotein is covalently attached via its lipidless GPI glycan remnant to the 1,6-beta-glucan of the outer cell wall layer.

The protein resides in the secreted. It is found in the cell wall. It localises to the membrane. In terms of biological role, hydrophilin which is essential to overcome the simple stress of the desiccation-rehydration process. The sequence is that of Hydrophilin YNL190W from Saccharomyces cerevisiae (strain ATCC 204508 / S288c) (Baker's yeast).